A 146-amino-acid chain; its full sequence is PTS system fructose-specific EIIA component (146 aa).

In terms of domain architecture, PTS EIIA type-4 spans 1-124; it reads MISVIISGHG…NLKAMSQQSF (124 aa). His-9 (tele-phosphohistidine intermediate) is an active-site residue. At His-9 the chain carries Phosphohistidine; by HPr.

It is found in the cytoplasm. The phosphoenolpyruvate-dependent sugar phosphotransferase system (sugar PTS), a major carbohydrate active transport system, catalyzes the phosphorylation of incoming sugar substrates concomitantly with their translocation across the cell membrane. The enzyme II LevDE PTS system is involved in fructose transport. Functionally, levD and LevE act as negative regulators of the levanase operon. They may be involved in a PTS-mediated phosphorylation of a regulator. This is PTS system fructose-specific EIIA component from Bacillus subtilis (strain 168).